We begin with the raw amino-acid sequence, 879 residues long: DNA mismatch repair protein MutS (879 aa).

639–646 contacts ATP; sequence GPNMGGKS.

This sequence belongs to the DNA mismatch repair MutS family.

Functionally, this protein is involved in the repair of mismatches in DNA. It is possible that it carries out the mismatch recognition step. This protein has a weak ATPase activity. The sequence is that of DNA mismatch repair protein MutS from Aromatoleum aromaticum (strain DSM 19018 / LMG 30748 / EbN1) (Azoarcus sp. (strain EbN1)).